Reading from the N-terminus, the 98-residue chain is Beta-elicitin MGM-beta (98 aa).

Cystine bridges form between Cys3–Cys71, Cys27–Cys56, and Cys51–Cys95.

Belongs to the elicitin family.

It localises to the secreted. In terms of biological role, induces local and distal defense responses (incompatible hypersensitive reaction) in plants from the solanaceae and cruciferae families. Elicits leaf necrosis and causes the accumulation of pathogenesis-related proteins. Might interact with the lipidic molecules of the plasma membrane. This chain is Beta-elicitin MGM-beta, found in Phytophthora megasperma (Potato pink rot fungus).